Reading from the N-terminus, the 313-residue chain is Beta-lactamase (313 aa).

Residues 1–15 (MQRIGVTDYTILGTV) form the signal peptide. The Acyl-ester intermediate role is filled by Ser-190.

The protein belongs to the class-C beta-lactamase family.

It carries out the reaction a beta-lactam + H2O = a substituted beta-amino acid. Functionally, upon expression in E.coli enables the latter to utilize penicillin as a carbon source. This Burkholderia multivorans (strain ATCC 17616 / 249) protein is Beta-lactamase (penA).